Consider the following 681-residue polypeptide: Phenylalanine--tRNA ligase beta subunit (681 aa).

In terms of domain architecture, B5 spans 288 to 363 (PARETVLLRP…RIHGYDQIPE (76 aa)). Mg(2+) contacts are provided by Asp-341, Asp-347, Glu-350, and Glu-351. Residues 586-681 (SSFPSIQRDL…EKQLEAVLLR (96 aa)) form the FDX-ACB domain.

It belongs to the phenylalanyl-tRNA synthetase beta subunit family. Type 1 subfamily. As to quaternary structure, tetramer of two alpha and two beta subunits. It depends on Mg(2+) as a cofactor.

The protein localises to the cytoplasm. The enzyme catalyses tRNA(Phe) + L-phenylalanine + ATP = L-phenylalanyl-tRNA(Phe) + AMP + diphosphate + H(+). The polypeptide is Phenylalanine--tRNA ligase beta subunit (Rhodopirellula baltica (strain DSM 10527 / NCIMB 13988 / SH1)).